A 280-amino-acid polypeptide reads, in one-letter code: Transmembrane protein 45B (280 aa).

7 consecutive transmembrane segments (helical) span residues H7–L27, L49–V69, M96–L116, L120–V140, I150–F170, L184–G204, and V216–I236.

It belongs to the TMEM45 family.

It localises to the membrane. This Xenopus tropicalis (Western clawed frog) protein is Transmembrane protein 45B (tmem45b).